Here is a 353-residue protein sequence, read N- to C-terminus: MTITLGRFTKEENDLFDIMDDWLRRDRFVFVGWSGLLLFPCAYFALGGWFTGTTFVTSWYTHGLASSYLEGCNFLTAAVSTPANSLAHSLLLLWGPEAQGDFTRWCQLGGLWTFVALHGAFGLIGFMLRQFELARSVQLRPYNAIAFSAPIAVFVSVFLIYPLGQSGWFFAPSFGVAAIFRFILFFQGFHNWTLNPFHMMGVAGVLGAALLCAIHGATVENTLFEDGDGANTFRAFNPTQAEETYSMVTANRFWSQIFGVAFSNKRWLHFFMLFVPVTGLWMSALGVVGLALNLRAYDFVSQEIRAAEDPEFETFYTKNILLNEGIRAWMAAQDQPHENLIFPEEVLPRGNAL.

An N-acetylthreonine modification is found at Thr-2. Thr-2 bears the Phosphothreonine mark. The helical transmembrane segment at 41 to 61 (CAYFALGGWFTGTTFVTSWYT) threads the bilayer. His-118 contributes to the chlorophyll a binding site. Residues 125–141 (GFMLRQFELARSVQLRP) form a helical membrane-spanning segment. Pheophytin a is bound by residues Gln-130 and Asn-143. A helical membrane pass occupies residues 153–166 (VFVSVFLIYPLGQS). Position 198 (His-198) interacts with chlorophyll a. A helical membrane pass occupies residues 208–228 (AALLCAIHGATVENTLFEDGD). Positions 215 and 262 each coordinate a plastoquinone. His-215 provides a ligand contact to Fe cation. Fe cation is bound at residue His-269. The helical transmembrane segment at 279–295 (GLWMSALGVVGLALNLR) threads the bilayer.

Belongs to the reaction center PufL/M/PsbA/D family. PSII is composed of 1 copy each of membrane proteins PsbA, PsbB, PsbC, PsbD, PsbE, PsbF, PsbH, PsbI, PsbJ, PsbK, PsbL, PsbM, PsbT, PsbX, PsbY, PsbZ, Psb30/Ycf12, at least 3 peripheral proteins of the oxygen-evolving complex and a large number of cofactors. It forms dimeric complexes. The D1/D2 heterodimer binds P680, chlorophylls that are the primary electron donor of PSII, and subsequent electron acceptors. It shares a non-heme iron and each subunit binds pheophytin, quinone, additional chlorophylls, carotenoids and lipids. There is also a Cl(-1) ion associated with D1 and D2, which is required for oxygen evolution. The PSII complex binds additional chlorophylls, carotenoids and specific lipids. is required as a cofactor.

It is found in the plastid. The protein localises to the chloroplast thylakoid membrane. It carries out the reaction 2 a plastoquinone + 4 hnu + 2 H2O = 2 a plastoquinol + O2. Its function is as follows. Photosystem II (PSII) is a light-driven water:plastoquinone oxidoreductase that uses light energy to abstract electrons from H(2)O, generating O(2) and a proton gradient subsequently used for ATP formation. It consists of a core antenna complex that captures photons, and an electron transfer chain that converts photonic excitation into a charge separation. The D1/D2 (PsbA/PsbD) reaction center heterodimer binds P680, the primary electron donor of PSII as well as several subsequent electron acceptors. D2 is needed for assembly of a stable PSII complex. This is Photosystem II D2 protein from Chloranthus spicatus (Chulantree).